Here is an 88-residue protein sequence, read N- to C-terminus: Small ribosomal subunit protein bS20 (88 aa).

It belongs to the bacterial ribosomal protein bS20 family.

Binds directly to 16S ribosomal RNA. The polypeptide is Small ribosomal subunit protein bS20 (Clostridium acetobutylicum (strain ATCC 824 / DSM 792 / JCM 1419 / IAM 19013 / LMG 5710 / NBRC 13948 / NRRL B-527 / VKM B-1787 / 2291 / W)).